Consider the following 451-residue polypeptide: Phosphoglucosamine mutase (451 aa).

S102 serves as the catalytic Phosphoserine intermediate. Residues S102, D242, D244, and D246 each coordinate Mg(2+). S102 carries the phosphoserine modification.

This sequence belongs to the phosphohexose mutase family. Mg(2+) serves as cofactor. Activated by phosphorylation.

It catalyses the reaction alpha-D-glucosamine 1-phosphate = D-glucosamine 6-phosphate. Functionally, catalyzes the conversion of glucosamine-6-phosphate to glucosamine-1-phosphate. This chain is Phosphoglucosamine mutase, found in Staphylococcus aureus (strain USA300).